The following is a 314-amino-acid chain: Endolytic peptidoglycan transglycosylase RlpA (314 aa).

The N-terminal stretch at 1–19 is a signal peptide; it reads MGWALKKVCFLGVIFLISA. Cys-20 is lipidated: N-palmitoyl cysteine. The S-diacylglycerol cysteine moiety is linked to residue Cys-20. The SPOR domain occupies 241–314; the sequence is SVSGGKFSLQ…YNQNAVLTRE (74 aa).

It belongs to the RlpA family.

The protein localises to the cell membrane. Lytic transglycosylase with a strong preference for naked glycan strands that lack stem peptides. This is Endolytic peptidoglycan transglycosylase RlpA from Helicobacter pylori (strain J99 / ATCC 700824) (Campylobacter pylori J99).